Reading from the N-terminus, the 135-residue chain is Cofilin-4 (135 aa).

Residues 3–135 (SCASINDEVI…SQSLVEERCK (133 aa)) form the ADF-H domain.

The protein belongs to the actin-binding proteins ADF family.

It is found in the cytoplasm. The protein localises to the cytoskeleton. Functionally, controls actin polymerization and depolymerization. This Dictyostelium discoideum (Social amoeba) protein is Cofilin-4 (cofE).